We begin with the raw amino-acid sequence, 424 residues long: Tyrosine--tRNA ligase 1 (424 aa).

Y37 contributes to the L-tyrosine binding site. A 'HIGH' region motif is present at residues 42–51 (PTADSLHLGH). L-tyrosine contacts are provided by Y175 and Q179. A 'KMSKS' region motif is present at residues 235-239 (KFGKT). Residue K238 participates in ATP binding. Residues 357 to 414 (ADLQQALVNAGLVPSRGQARTMISSNAVAINGEKQSEPEYLFTDSNRLFDRYTLLRRG) form the S4 RNA-binding domain.

This sequence belongs to the class-I aminoacyl-tRNA synthetase family. TyrS type 1 subfamily. In terms of assembly, homodimer.

The protein resides in the cytoplasm. It catalyses the reaction tRNA(Tyr) + L-tyrosine + ATP = L-tyrosyl-tRNA(Tyr) + AMP + diphosphate + H(+). Catalyzes the attachment of tyrosine to tRNA(Tyr) in a two-step reaction: tyrosine is first activated by ATP to form Tyr-AMP and then transferred to the acceptor end of tRNA(Tyr). The sequence is that of Tyrosine--tRNA ligase 1 from Photorhabdus laumondii subsp. laumondii (strain DSM 15139 / CIP 105565 / TT01) (Photorhabdus luminescens subsp. laumondii).